The primary structure comprises 181 residues: Acireductone dioxygenase (181 aa).

Fe(2+)-binding residues include His97, His99, Glu103, and His141. Ni(2+) is bound by residues His97, His99, Glu103, and His141.

It belongs to the acireductone dioxygenase (ARD) family. As to quaternary structure, monomer. Requires Fe(2+) as cofactor. Ni(2+) is required as a cofactor.

It catalyses the reaction 1,2-dihydroxy-5-(methylsulfanyl)pent-1-en-3-one + O2 = 3-(methylsulfanyl)propanoate + CO + formate + 2 H(+). It carries out the reaction 1,2-dihydroxy-5-(methylsulfanyl)pent-1-en-3-one + O2 = 4-methylsulfanyl-2-oxobutanoate + formate + 2 H(+). It functions in the pathway amino-acid biosynthesis; L-methionine biosynthesis via salvage pathway; L-methionine from S-methyl-5-thio-alpha-D-ribose 1-phosphate: step 5/6. Catalyzes 2 different reactions between oxygen and the acireductone 1,2-dihydroxy-3-keto-5-methylthiopentene (DHK-MTPene) depending upon the metal bound in the active site. Fe-containing acireductone dioxygenase (Fe-ARD) produces formate and 2-keto-4-methylthiobutyrate (KMTB), the alpha-ketoacid precursor of methionine in the methionine recycle pathway. Ni-containing acireductone dioxygenase (Ni-ARD) produces methylthiopropionate, carbon monoxide and formate, and does not lie on the methionine recycle pathway. The polypeptide is Acireductone dioxygenase (Pseudomonas syringae pv. tomato (strain ATCC BAA-871 / DC3000)).